A 184-amino-acid polypeptide reads, in one-letter code: LPS-assembly lipoprotein LptE (184 aa).

The N-terminal stretch at 1 to 19 (MRHRLFTLVLGLAVLITAG) is a signal peptide. The N-palmitoyl cysteine moiety is linked to residue Cys-20. Cys-20 carries S-diacylglycerol cysteine lipidation.

Belongs to the LptE lipoprotein family. Component of the lipopolysaccharide transport and assembly complex. Interacts with LptD.

It localises to the cell outer membrane. Its function is as follows. Together with LptD, is involved in the assembly of lipopolysaccharide (LPS) at the surface of the outer membrane. Required for the proper assembly of LptD. Binds LPS and may serve as the LPS recognition site at the outer membrane. This Pectobacterium atrosepticum (strain SCRI 1043 / ATCC BAA-672) (Erwinia carotovora subsp. atroseptica) protein is LPS-assembly lipoprotein LptE.